The primary structure comprises 305 residues: Putative ankyrin repeat protein RF_0580 (305 aa).

ANK repeat units lie at residues 5–34, 39–68, 72–101, 107–136, 140–169, 173–202, and 206–235; these read YNKN…NIDE, RGET…SPNI, SGQT…NIDL, CGHS…DINS, FGAS…DVNA, YEDT…DVNI, and NNFT…TIKI.

The protein is Putative ankyrin repeat protein RF_0580 of Rickettsia felis (strain ATCC VR-1525 / URRWXCal2) (Rickettsia azadi).